The primary structure comprises 254 residues: UDP-2,3-diacylglucosamine hydrolase (254 aa).

Mn(2+) is bound by residues aspartate 8, histidine 10, aspartate 41, asparagine 79, and histidine 114. A substrate-binding site is contributed by 79–80 (NR). The substrate site is built by aspartate 122, serine 160, asparagine 164, lysine 167, and histidine 195. Residues histidine 195 and histidine 197 each coordinate Mn(2+).

The protein belongs to the LpxH family. Mn(2+) serves as cofactor.

It localises to the cell inner membrane. It catalyses the reaction UDP-2-N,3-O-bis[(3R)-3-hydroxytetradecanoyl]-alpha-D-glucosamine + H2O = 2-N,3-O-bis[(3R)-3-hydroxytetradecanoyl]-alpha-D-glucosaminyl 1-phosphate + UMP + 2 H(+). The protein operates within glycolipid biosynthesis; lipid IV(A) biosynthesis; lipid IV(A) from (3R)-3-hydroxytetradecanoyl-[acyl-carrier-protein] and UDP-N-acetyl-alpha-D-glucosamine: step 4/6. Functionally, hydrolyzes the pyrophosphate bond of UDP-2,3-diacylglucosamine to yield 2,3-diacylglucosamine 1-phosphate (lipid X) and UMP by catalyzing the attack of water at the alpha-P atom. Involved in the biosynthesis of lipid A, a phosphorylated glycolipid that anchors the lipopolysaccharide to the outer membrane of the cell. This Aeromonas salmonicida (strain A449) protein is UDP-2,3-diacylglucosamine hydrolase.